A 217-amino-acid chain; its full sequence is IMPACT family member YvyE (217 aa).

This sequence belongs to the IMPACT family.

In Bacillus subtilis (strain 168), this protein is IMPACT family member YvyE (yvyE).